Reading from the N-terminus, the 133-residue chain is Ribosome-binding factor A (133 aa).

It belongs to the RbfA family. Monomer. Binds 30S ribosomal subunits, but not 50S ribosomal subunits or 70S ribosomes.

The protein resides in the cytoplasm. In terms of biological role, one of several proteins that assist in the late maturation steps of the functional core of the 30S ribosomal subunit. Associates with free 30S ribosomal subunits (but not with 30S subunits that are part of 70S ribosomes or polysomes). Required for efficient processing of 16S rRNA. May interact with the 5'-terminal helix region of 16S rRNA. The polypeptide is Ribosome-binding factor A (Psychromonas ingrahamii (strain DSM 17664 / CCUG 51855 / 37)).